A 486-amino-acid chain; its full sequence is Ribosomal RNA small subunit methyltransferase F (486 aa).

S-adenosyl-L-methionine-binding positions include 122–128 (ASAPGSK), Glu146, Asp173, and Asp191. The active-site Nucleophile is Cys244.

Belongs to the class I-like SAM-binding methyltransferase superfamily. RsmB/NOP family.

It is found in the cytoplasm. It catalyses the reaction cytidine(1407) in 16S rRNA + S-adenosyl-L-methionine = 5-methylcytidine(1407) in 16S rRNA + S-adenosyl-L-homocysteine + H(+). In terms of biological role, specifically methylates the cytosine at position 1407 (m5C1407) of 16S rRNA. The sequence is that of Ribosomal RNA small subunit methyltransferase F from Shewanella loihica (strain ATCC BAA-1088 / PV-4).